The primary structure comprises 321 residues: MESRINWGIIGCGNVAEVKSGPAFYKTENSTLVAVMRRNEDKVIDFANRHGVANWTTNAEALIQNDLINAVYIATPPSSHLQYALRAINVGKNVYLEKPMVLNNHEANILVEAVKRSNVKVTVAHYRRELPVYLKIKELLDSNVIGNVISAEIQIKQTRNTNLIAKTEVNWRTIPEISGGGYFHDIAPHQIDLMCHYFGEVENIKKGSCKENQVSHQDVSGEVLFKNGVQFSGTWNFNALEDKDECTIKGERGSISFSFYTSTITVSKNGLIESYHYENPEHVQQPMIEKTVGYFLAHNSNPCSVEEAAMVTHIMDVFCGT.

Belongs to the Gfo/Idh/MocA family.

It localises to the cell surface. In terms of biological role, oxidoreductase that may be involved in ulvan degradation. Ulvan is the main polysaccharide component of the Ulvales (green seaweed) cell wall. It is composed of disaccharide building blocks comprising 3-sulfated rhamnose (Rha3S) linked to D-glucuronic acid (GlcA), L-iduronic acid (IduA), or D-xylose (Xyl). The sequence is that of Oxidoreductase P35 from Formosa agariphila (strain DSM 15362 / KCTC 12365 / LMG 23005 / KMM 3901 / M-2Alg 35-1).